The chain runs to 164 residues: Transcription factor MafF (164 aa).

The segment at Arg51–Lys76 is basic motif. Positions Arg51–Leu114 constitute a bZIP domain. The segment at Leu79 to Leu93 is leucine-zipper. Residues Lys141–Ser164 form a disordered region. Residues Gly149–Ser164 show a composition bias toward low complexity.

The protein belongs to the bZIP family. Maf subfamily. In terms of assembly, monomer and homo- or heterodimer. Interacts with MIP. Forms high affinity heterodimers with members of the CNC-bZIP family such as NFE2L1/NRF1. As to expression, expressed in the term myometrium and kidney.

The protein localises to the nucleus. Functionally, since they lack a putative transactivation domain, the small Mafs behave as transcriptional repressors when they dimerize among themselves. However, they seem to serve as transcriptional activators by dimerizing with other (usually larger) basic-zipper proteins, such as NFE2L1/NRF1, and recruiting them to specific DNA-binding sites. Interacts with the upstream promoter region of the oxytocin receptor gene. May be a transcriptional enhancer in the up-regulation of the oxytocin receptor gene at parturition. This is Transcription factor MafF (MAFF) from Homo sapiens (Human).